The primary structure comprises 678 residues: NADPH--cytochrome P450 reductase (678 aa).

Gly-2 is subject to N-acetylglycine. The Lumenal segment spans residues Gly-2–Leu-22. A helical transmembrane segment spans residues Phe-23 to Ile-43. Over Phe-44–Ser-678 the chain is Cytoplasmic. Residues Ile-80–Trp-224 enclose the Flavodoxin-like domain. Residues Ser-86–Ala-91, Ala-138–Gly-141, Leu-173–Asn-182, and Asp-208 contribute to the FMN site. An FAD-binding FR-type domain is found at Lys-279–Pro-521. Arg-298 contacts NADP(+). FAD is bound by residues Arg-424, Arg-454–Ser-457, Cys-472–Val-474, Tyr-478, and Gly-488–Thr-491. NADP(+) contacts are provided by residues Thr-535, Ser-596–Arg-597, Lys-602–Gln-606, and Asp-639. Trp-677 is a binding site for FAD.

It belongs to the NADPH--cytochrome P450 reductase family. The protein in the N-terminal section; belongs to the flavodoxin family. In the C-terminal section; belongs to the flavoprotein pyridine nucleotide cytochrome reductase family. FAD is required as a cofactor. Requires FMN as cofactor.

It is found in the endoplasmic reticulum membrane. It catalyses the reaction 2 oxidized [cytochrome P450] + NADPH = 2 reduced [cytochrome P450] + NADP(+) + H(+). Functionally, this enzyme is required for electron transfer from NADP to cytochrome P450 in microsomes. It can also provide electron transfer to heme oxygenase and cytochrome B5. This Rattus norvegicus (Rat) protein is NADPH--cytochrome P450 reductase.